A 210-amino-acid chain; its full sequence is Pyridoxine/pyridoxamine 5'-phosphate oxidase (210 aa).

Residues 7–10 and Lys65 each bind substrate; that span reads REDY. FMN-binding positions include 60–65, 75–76, Arg81, Lys82, and Gln104; these read RMVLLK and FT. Substrate-binding residues include Tyr122, Arg126, and Ser130. Residues 139-140 and Trp183 each bind FMN; that span reads QS. Residue 189-191 coordinates substrate; it reads RLH. Arg193 provides a ligand contact to FMN.

The protein belongs to the pyridoxamine 5'-phosphate oxidase family. In terms of assembly, homodimer. FMN serves as cofactor.

The catalysed reaction is pyridoxamine 5'-phosphate + O2 + H2O = pyridoxal 5'-phosphate + H2O2 + NH4(+). It catalyses the reaction pyridoxine 5'-phosphate + O2 = pyridoxal 5'-phosphate + H2O2. It participates in cofactor metabolism; pyridoxal 5'-phosphate salvage; pyridoxal 5'-phosphate from pyridoxamine 5'-phosphate: step 1/1. Its pathway is cofactor metabolism; pyridoxal 5'-phosphate salvage; pyridoxal 5'-phosphate from pyridoxine 5'-phosphate: step 1/1. In terms of biological role, catalyzes the oxidation of either pyridoxine 5'-phosphate (PNP) or pyridoxamine 5'-phosphate (PMP) into pyridoxal 5'-phosphate (PLP). The protein is Pyridoxine/pyridoxamine 5'-phosphate oxidase of Neisseria meningitidis serogroup A / serotype 4A (strain DSM 15465 / Z2491).